The chain runs to 447 residues: Alkylglycerol monooxygenase (447 aa).

2 consecutive transmembrane segments (helical) span residues Ala-43–Gly-63 and Trp-111–Phe-131. Residues Phe-119–Thr-249 enclose the Fatty acid hydroxylase domain. Positions His-132–His-136 match the Histidine box-1 motif. The Histidine box-2 motif lies at His-145–His-149. Residues Ser-170–Ile-190 traverse the membrane as a helical segment. The short motif at His-221–His-225 is the Histidine box-3 element. The next 3 helical transmembrane spans lie at Val-340–Leu-360, Val-363–Leu-383, and Ile-413–Val-433.

This sequence belongs to the sterol desaturase family. TMEM195 subfamily. The cofactor is Fe cation. As to expression, highly expressed in lever and small intestine.

Its subcellular location is the endoplasmic reticulum membrane. The enzyme catalyses 1-O-(1,2-saturated-alkyl)-sn-glycerol + (6R)-L-erythro-5,6,7,8-tetrahydrobiopterin + O2 = a 1-(1-hydroxyalkyl)-sn-glycerol + (6R)-L-erythro-6,7-dihydrobiopterin + H2O. Functionally, glyceryl-ether monooxygenase that cleaves the O-alkyl bond of ether lipids. Ether lipids are essential components of brain membranes. This is Alkylglycerol monooxygenase (Agmo) from Mus musculus (Mouse).